The primary structure comprises 284 residues: P2R1A-PPP2R2A-interacting phosphatase regulator 1 (284 aa).

A disordered region spans residues 1–65 (MAQEKMELDL…RRNSTTFPSR (65 aa)). Over residues 20–29 (EGGGPGGGGL) the composition is skewed to gly residues. A Phosphoserine modification is found at serine 32. Serine 34 is subject to Phosphoserine; by CHEK1. Residues serine 42, serine 45, serine 59, and serine 73 each carry the phosphoserine modification. Lysine 86 participates in a covalent cross-link: Glycyl lysine isopeptide (Lys-Gly) (interchain with G-Cter in SUMO1). Residues serine 140 and serine 144 each carry the phosphoserine modification. Threonine 146 carries the post-translational modification Phosphothreonine. The disordered stretch occupies residues 164-185 (SNGLPPSPIPSPTTRFTTRRSQ). The segment covering 175 to 185 (PTTRFTTRRSQ) has biased composition (low complexity). Phosphoserine is present on residues serine 184 and serine 186. Residues 233–284 (GVCVSSDTLDGNSSSAGSSCNSPAKVSTTTDSPVSPAQAASPFIPVDELSSK) are disordered. Low complexity predominate over residues 243 to 254 (GNSSSAGSSCNS). The span at 256–267 (AKVSTTTDSPVS) shows a compositional bias: polar residues. Phosphoserine occurs at positions 264, 267, and 273.

This sequence belongs to the FAM122 family. As to quaternary structure, interacts with PPP2CA and PPP2R1A. Interacts (via its N-terminus) with PPP2R2A; the interaction is direct and this interaction inhibits PP2A activity. The CHEK1-mediated Ser-34 phosphorylated form interacts with 14-3-3 proteins. In terms of processing, CHEK1-mediated phosphorylation at Ser-34 negatively regulates its ability to inhibit serine/threonine-protein phosphatase 2A (PP2A) activity. Phosphorylation leads to its release from the PP2A complex and its sequestration by 14-3-3 proteins in the cytoplasm resulting in its inability to translocate to the nucleus, where it otherwise inhibits PP2A.

The protein resides in the nucleus. Its subcellular location is the cytoplasm. Acts as an inhibitor of serine/threonine-protein phosphatase 2A (PP2A) activity. Inhibits PP2A activity by blocking the substrate binding site on PPP2R2A and the active site of PPP2CA. Potentiates ubiquitin-mediated proteasomal degradation of serine/threonine-protein phosphatase 2A catalytic subunit alpha (PPP2CA). Inhibits PP2A-mediated dephosphorylation of WEE1, promoting ubiquitin-mediated proteolysis of WEE1, thereby releasing G2/M checkpoint. This Mus musculus (Mouse) protein is P2R1A-PPP2R2A-interacting phosphatase regulator 1.